Consider the following 470-residue polypeptide: Glutamate--tRNA ligase 2 (470 aa).

Residues 10–20 carry the 'HIGH' region motif; the sequence is PSPTGFLHIGS. The short motif at 239–243 is the 'KMSKS' region element; that stretch reads KLSKR. Lys-242 is an ATP binding site.

It belongs to the class-I aminoacyl-tRNA synthetase family. Glutamate--tRNA ligase type 1 subfamily. In terms of assembly, monomer.

The protein localises to the cytoplasm. The enzyme catalyses tRNA(Glu) + L-glutamate + ATP = L-glutamyl-tRNA(Glu) + AMP + diphosphate. In terms of biological role, catalyzes the attachment of glutamate to tRNA(Glu) in a two-step reaction: glutamate is first activated by ATP to form Glu-AMP and then transferred to the acceptor end of tRNA(Glu). The chain is Glutamate--tRNA ligase 2 from Rickettsia prowazekii (strain Madrid E).